The chain runs to 152 residues: Pleckstrin homology-like domain family A member 2 (152 aa).

Phosphoserine occurs at positions 3 and 42. One can recognise a PH domain in the interval 7–99 (VLREGELEKR…WNAAIALALI (93 aa)). Residues 112 to 152 (SRQERTAPAAPAEDAVAAAAAAPSEPSEPSRPSPQPKPRTP) are disordered. Over residues 118 to 138 (APAAPAEDAVAAAAAAPSEPS) the composition is skewed to low complexity. The span at 140–152 (PSRPSPQPKPRTP) shows a compositional bias: pro residues. 2 positions are modified to phosphoserine: Ser141 and Ser144. Thr151 carries the post-translational modification Phosphothreonine.

The protein belongs to the PHLDA2 family. Expressed in placenta and adult prostate gland. In placenta, it is present in all cells of the villous cytotrophoblast. The protein is absent in cells from hydatidiform moles. Hydatidiform mole is a gestation characterized by abnormal development of both fetus and trophoblast. The majority of hydatidiform moles are associated with an excess of paternal to maternal genomes and are likely to result from the abnormal expression of imprinted genes (at protein level). Expressed at low levels in adult liver and lung, and fetal liver. Expressed in adult brain and neuroblastoma, medullablastoma and glioblastoma cell lines.

The protein localises to the cytoplasm. The protein resides in the membrane. Its function is as follows. Plays a role in regulating placenta growth. May act via its PH domain that competes with other PH domain-containing proteins, thereby preventing their binding to membrane lipids. The chain is Pleckstrin homology-like domain family A member 2 (PHLDA2) from Homo sapiens (Human).